A 361-amino-acid chain; its full sequence is MLFELARWLQQFESLFGLFNYLTFRSILAALTALFLSLWIGPVLIQKLSQFKGGQPIRQDGPKMHFSKAGTPTMGGSLILMTVTLSVLLWGDLRNRYVWLVLVVMLAFGAIGWYDDWIKLARRDPNGLKSRWKYLLQSIFGLAAGLFLYFTADVPAAVTFYIPMFKSIALPLTSISFVAITYFWIVGFSNAVNLTDGLDGLAIMPTVLVACALGVFAYASGNTLFSSYLKIPTIPGAGDLIIICAAIAGAGLGFLWFNAYPAMVFMGDIGALALGAVLGTIAVIVRQELVLVVMGGVFVIETLSVIIQVTSFKLTGKRVFRMAPIHHHFELKGWPEPRVIVRFWIISVVLVLVGLATLKVR.

A run of 10 helical transmembrane segments spans residues 26–46 (SILA…VLIQ), 73–93 (TMGG…WGDL), 98–118 (VWLV…DDWI), 139–159 (IFGL…AAVT), 168–188 (IALP…IVGF), 200–220 (GLAI…AYAS), 237–257 (AGDL…FLWF), 264–284 (VFMG…IAVI), 289–309 (LVLV…IIQV), and 339–359 (VIVR…ATLK).

This sequence belongs to the glycosyltransferase 4 family. MraY subfamily. It depends on Mg(2+) as a cofactor.

The protein localises to the cell inner membrane. It carries out the reaction UDP-N-acetyl-alpha-D-muramoyl-L-alanyl-gamma-D-glutamyl-meso-2,6-diaminopimeloyl-D-alanyl-D-alanine + di-trans,octa-cis-undecaprenyl phosphate = di-trans,octa-cis-undecaprenyl diphospho-N-acetyl-alpha-D-muramoyl-L-alanyl-D-glutamyl-meso-2,6-diaminopimeloyl-D-alanyl-D-alanine + UMP. It participates in cell wall biogenesis; peptidoglycan biosynthesis. Its function is as follows. Catalyzes the initial step of the lipid cycle reactions in the biosynthesis of the cell wall peptidoglycan: transfers peptidoglycan precursor phospho-MurNAc-pentapeptide from UDP-MurNAc-pentapeptide onto the lipid carrier undecaprenyl phosphate, yielding undecaprenyl-pyrophosphoryl-MurNAc-pentapeptide, known as lipid I. The sequence is that of Phospho-N-acetylmuramoyl-pentapeptide-transferase from Xylella fastidiosa (strain 9a5c).